Consider the following 221-residue polypeptide: MTGVGSAVRRLYLSVYNWAVFFGWAQVLYYAVTTLLESGHEAVYAAVERPLQFAQTAAFLEILHGLVGLVRSPVSATLPQIGSRLFLTWGILWSFPETHSHILVTSLVISWSITEIIRYSFFGMKETFGFAPSWLLWLRYSTFMVLYPTGISSEVGLIYIALPYMKATEKYCLRMPNKWNFSFDFSYASILSLAVYVPGSPHMFTYMLAQRKKALAKAKAA.

The Cytoplasmic segment spans residues 1-11 (MTGVGSAVRRL). A helical membrane pass occupies residues 12–32 (YLSVYNWAVFFGWAQVLYYAV). Over 33-51 (TTLLESGHEAVYAAVERPL) the chain is Lumenal. A helical transmembrane segment spans residues 52–70 (QFAQTAAFLEILHGLVGLV). At 71-76 (RSPVSA) the chain is on the cytoplasmic side. Residues 77–95 (TLPQIGSRLFLTWGILWSF) form a helical membrane-spanning segment. Topologically, residues 96–100 (PETHS) are lumenal. A helical transmembrane segment spans residues 101 to 121 (HILVTSLVISWSITEIIRYSF). The Cytoplasmic portion of the chain corresponds to 122 to 141 (FGMKETFGFAPSWLLWLRYS). The helical transmembrane segment at 142 to 165 (TFMVLYPTGISSEVGLIYIALPYM) threads the bilayer. Catalysis depends on residues Tyr-147 and Glu-154. The Lumenal segment spans residues 166 to 184 (KATEKYCLRMPNKWNFSFD). A helical membrane pass occupies residues 185 to 209 (FSYASILSLAVYVPGSPHMFTYMLA). Over 210-221 (QRKKALAKAKAA) the chain is Cytoplasmic.

Belongs to the very long-chain fatty acids dehydratase HACD family.

The protein localises to the endoplasmic reticulum membrane. The enzyme catalyses a very-long-chain (3R)-3-hydroxyacyl-CoA = a very-long-chain (2E)-enoyl-CoA + H2O. The protein operates within lipid metabolism; fatty acid biosynthesis. Its function is as follows. Catalyzes the third of the four reactions of the long-chain fatty acids elongation cycle. This endoplasmic reticulum-bound enzymatic process, allows the addition of two carbons to the chain of long- and very long-chain fatty acids/VLCFAs per cycle. This enzyme catalyzes the dehydration of the 3-hydroxyacyl-CoA intermediate into trans-2,3-enoyl-CoA, within each cycle of fatty acid elongation. Thereby, it participates in the production of VLCFAs of different chain lengths that are involved in multiple biological processes as precursors of membrane lipids and lipid mediators. May be an anti-phosphatase that prevents CDKA-1 dephosphorylation and activation. Involved in the hormonal control of cell division and differentiation. Required for proliferation control of meristematic and non-meristematic cells. Negative regulator of the cell cycle. The protein is Very-long-chain (3R)-3-hydroxyacyl-CoA dehydratase PASTICCINO 2B (PAS2B) of Oryza sativa subsp. japonica (Rice).